Reading from the N-terminus, the 147-residue chain is 3-dehydroquinate dehydratase (147 aa).

The Proton acceptor role is filled by Y23. Substrate is bound by residues N75, H81, and D88. H101 acts as the Proton donor in catalysis. Residues 102–103 (LS) and R112 contribute to the substrate site.

Belongs to the type-II 3-dehydroquinase family. In terms of assembly, homododecamer.

The catalysed reaction is 3-dehydroquinate = 3-dehydroshikimate + H2O. Its pathway is metabolic intermediate biosynthesis; chorismate biosynthesis; chorismate from D-erythrose 4-phosphate and phosphoenolpyruvate: step 3/7. In terms of biological role, catalyzes a trans-dehydration via an enolate intermediate. This Stutzerimonas stutzeri (strain A1501) (Pseudomonas stutzeri) protein is 3-dehydroquinate dehydratase.